A 177-amino-acid polypeptide reads, in one-letter code: MQASIQNRIFFGLVVLWSTTVLEPLRAIPRMDLNDYPQPIAGHQRWVIQLPGLLAKSSDPGLSTNAVDWRVQLIVGRTIQLVCNQYHLAGQGLRMERFQGAEQRMLYSVAGAVKVMSTRMVCPPDEPKRESFLVLGSKPYLVPYNASFPIVVDVPDGLEVRWRLWKAEITQREAIKL.

The signal sequence occupies residues 1-23 (MQASIQNRIFFGLVVLWSTTVLE). Cys-83 and Cys-122 are oxidised to a cystine.

It belongs to the protease inhibitor I11 (ecotin) family. As to quaternary structure, homodimer.

The protein resides in the periplasm. In terms of biological role, general inhibitor of family S1 serine proteases. The polypeptide is Ecotin (Prochlorococcus marinus (strain MIT 9313)).